Here is a 462-residue protein sequence, read N- to C-terminus: BBSome complex member bbs-4 (462 aa).

A disordered region spans residues 1–46 (MEASNQDEIIGTDVIPNEQDNPEEVVPEPTSLDVPPPPPERAPSAP). TPR repeat units lie at residues 89-122 (EAAFHVRGLIARNEGELEEAMECFHKAYELSGKN), 124-156 (RYFYETGRCNFLLGRHQIAVEQLTKASEVMKDN), 199-232 (ATLICFLGRLCEELGDTSGAIAAYKSSLKLQPDN), 234-266 (EVMNLLGLIYLRTGQVQEGFVQLGNCLAYDPAN), 268-300 (QAILTIGSIMQNHSDHDVALNKYRVAADVSDYN), 335-368 (YKISYNLGVLHDIMNLHCSALHYIKLCTELYPQN), and 369-402 (AKAVGAMAVILSHMNDDKNARLAYKKSIELKKNP).

This sequence belongs to the BBS4 family. As to quaternary structure, part of BBSome complex, that contains at least bbs-1, bbs-2, bbs-4, bbs-5, osm-12, bbs-8/ttc-8 and bbs-9. Interacts (via C-terminus) with bbs-5; the interaction is direct.

The protein resides in the cytoplasm. The protein localises to the cytoskeleton. It localises to the microtubule organizing center. It is found in the centrosome. Its subcellular location is the cell projection. The protein resides in the cilium membrane. Component of the BBSome complex. The BBSome complex is thought to function as a coat complex required for sorting of specific membrane proteins to the primary cilia. The BBSome complex is required for ciliogenesis but is dispensable for centriolar satellite function. Required for proper BBSome complex assembly and its ciliary localization. May be required for microtubule anchoring at the centrosome but not for microtubule nucleation. May be required for the dynein-mediated transport of pericentriolar proteins to the centrosome. Required, redundantly with bbs-5, for cilia biogenesis and both the assembly and movement of intraflagellar transport proteins along the ciliary axoneme. Plays a role in the removal of degraded mechanosensory receptors within the cilia. The polypeptide is BBSome complex member bbs-4 (Caenorhabditis elegans).